Reading from the N-terminus, the 197-residue chain is Holliday junction branch migration complex subunit RuvA (197 aa).

The domain I stretch occupies residues 1–64 (MIGHLEGRLR…EDAIQLYGFR (64 aa)). The segment at 65 to 143 (TVAEKDMFLR…VKKGREAEQP (79 aa)) is domain II. Residues 144–145 (AP) form a flexible linker region. The interval 146 to 197 (AAESSYGDAYSALVNLGYRPAEAEKALGKAIKSLGADPPVEKLLKETLRLLA) is domain III.

This sequence belongs to the RuvA family. As to quaternary structure, homotetramer. Forms an RuvA(8)-RuvB(12)-Holliday junction (HJ) complex. HJ DNA is sandwiched between 2 RuvA tetramers; dsDNA enters through RuvA and exits via RuvB. An RuvB hexamer assembles on each DNA strand where it exits the tetramer. Each RuvB hexamer is contacted by two RuvA subunits (via domain III) on 2 adjacent RuvB subunits; this complex drives branch migration. In the full resolvosome a probable DNA-RuvA(4)-RuvB(12)-RuvC(2) complex forms which resolves the HJ.

Its subcellular location is the cytoplasm. The RuvA-RuvB-RuvC complex processes Holliday junction (HJ) DNA during genetic recombination and DNA repair, while the RuvA-RuvB complex plays an important role in the rescue of blocked DNA replication forks via replication fork reversal (RFR). RuvA specifically binds to HJ cruciform DNA, conferring on it an open structure. The RuvB hexamer acts as an ATP-dependent pump, pulling dsDNA into and through the RuvAB complex. HJ branch migration allows RuvC to scan DNA until it finds its consensus sequence, where it cleaves and resolves the cruciform DNA. The polypeptide is Holliday junction branch migration complex subunit RuvA (Syntrophobacter fumaroxidans (strain DSM 10017 / MPOB)).